We begin with the raw amino-acid sequence, 60 residues long: Large ribosomal subunit protein uL30 (60 aa).

This sequence belongs to the universal ribosomal protein uL30 family. Part of the 50S ribosomal subunit.

The protein is Large ribosomal subunit protein uL30 of Bacillus pumilus (strain SAFR-032).